The sequence spans 485 residues: Programmed cell death protein 7 (485 aa).

The tract at residues 1–133 (MALPPFFGQG…EAPPPPADVL (133 aa)) is disordered. The span at 12-48 (PGPPPPQPPPPAPFGCPPPPLPSPAFPPPLPQRPGPF) shows a compositional bias: pro residues. Over residues 49-71 (PGASAPFLQPPLALQPRASAEAS) the composition is skewed to low complexity. 2 stretches are compositionally biased toward pro residues: residues 82 to 96 (PVPPPPLPPPPPQCR) and 109 to 130 (PPPPGPGPPWSPRWPEAPPPPA). Coiled coils occupy residues 232 to 335 (VGEA…AAAR) and 362 to 411 (RSEL…ESKL).

In terms of assembly, interacts with RBM40. Component of the U11/U12 snRNPs that are part of the U12-type spliceosome.

It is found in the nucleus. Functionally, promotes apoptosis when overexpressed. The protein is Programmed cell death protein 7 (PDCD7) of Homo sapiens (Human).